A 535-amino-acid chain; its full sequence is Succinate-semialdehyde dehydrogenase, mitochondrial (535 aa).

Residues 1 to 47 (MATCFWLRSCGARRLGSTFPGCRLRPRAGGLVPASGPAPGPAQLRCY) constitute a mitochondrion transit peptide. The residue at position 126 (K126) is an N6-acetyllysine; alternate. N6-succinyllysine; alternate is present on K126. An N6-succinyllysine mark is found at K135 and K184. NAD(+) contacts are provided by residues R213 and 228–231 (KPAE). R213 is a binding site for substrate. At K265 the chain carries N6-acetyllysine; alternate. K265 is modified (N6-succinyllysine; alternate). 284–289 (GSTTTG) contacts NAD(+). E306 serves as the catalytic Proton acceptor. A substrate-binding site is contributed by R334. C340 acts as the Nucleophile in catalysis. Cysteines 340 and 342 form a disulfide. K365 is subject to N6-acetyllysine. Residue K402 is modified to N6-succinyllysine. K411 is modified (N6-acetyllysine). Residue S498 coordinates substrate. S499 carries the phosphoserine modification.

It belongs to the aldehyde dehydrogenase family. As to quaternary structure, homotetramer.

The protein localises to the mitochondrion. It catalyses the reaction succinate semialdehyde + NAD(+) + H2O = succinate + NADH + 2 H(+). It participates in amino-acid degradation; 4-aminobutanoate degradation. With respect to regulation, redox-regulated. Inhibited under oxydizing conditions. Its function is as follows. Catalyzes one step in the degradation of the inhibitory neurotransmitter gamma-aminobutyric acid (GABA). The polypeptide is Succinate-semialdehyde dehydrogenase, mitochondrial (ALDH5A1) (Hylobates lar (Lar gibbon)).